Reading from the N-terminus, the 335-residue chain is Dihydroorotate dehydrogenase (quinone) (335 aa).

FMN-binding positions include 61–65 (AGLDK) and threonine 85. Residue lysine 65 coordinates substrate. A substrate-binding site is contributed by 110–114 (NRMGF). The FMN site is built by asparagine 138 and asparagine 171. Asparagine 171 provides a ligand contact to substrate. Serine 174 (nucleophile) is an active-site residue. Asparagine 176 contributes to the substrate binding site. Lysine 216 and threonine 244 together coordinate FMN. 245 to 246 (NT) lines the substrate pocket. FMN contacts are provided by residues glycine 267, glycine 296, and 317 to 318 (YS).

Belongs to the dihydroorotate dehydrogenase family. Type 2 subfamily. As to quaternary structure, monomer. The cofactor is FMN.

It is found in the cell membrane. It catalyses the reaction (S)-dihydroorotate + a quinone = orotate + a quinol. It participates in pyrimidine metabolism; UMP biosynthesis via de novo pathway; orotate from (S)-dihydroorotate (quinone route): step 1/1. Its function is as follows. Catalyzes the conversion of dihydroorotate to orotate with quinone as electron acceptor. The chain is Dihydroorotate dehydrogenase (quinone) from Pseudoalteromonas atlantica (strain T6c / ATCC BAA-1087).